The following is a 770-amino-acid chain: Low-density lipoprotein receptor-related protein 3 (770 aa).

The signal sequence occupies residues 1–36 (MEKRAAAGPEGAPGARAPLAVVCLVNLFLTGRLSSA). Over 37 to 496 (VPALAACSGK…HGCLAAVPRK (460 aa)) the chain is Extracellular. 9 disulfides stabilise this stretch: C43–C72, C99–C120, C166–C178, C173–C191, C185–C200, C212–C227, C219–C240, C234–C249, and C254–C282. The region spanning 43–159 (CSGKLEQHTE…QGFRLSYIRG (117 aa)) is the CUB 1 domain. The N-linked (GlcNAc...) asparagine glycan is linked to N71. LDL-receptor class A domains are found at residues 165–201 (SCQTDEFRCDNGKCLPGPWQCNMVDECGDGSDEGNCS) and 211–250 (LCPGGTFPCSGARSTRCLPVERRCDGTQDCGDGSDEAGCP). Residue N199 is glycosylated (N-linked (GlcNAc...) asparagine). The region spanning 254–365 (CGRRLGSFYG…HGFNATYQVK (112 aa)) is the CUB 2 domain. Residue N359 is glycosylated (N-linked (GlcNAc...) asparagine). LDL-receptor class A domains lie at 415–453 (ACPPDQYPCEGGSGLCYAPADRCNNQKSCPDGADEKNCF) and 454–490 (SCQPGTFHCGTNLCIFETWRCDGQEDCQDGSDEHGCL). Disulfide bonds link C416–C430, C423–C443, C437–C452, C455–C467, C462–C480, and C474–C489. Residues 497–517 (VITAALIGSLVCGLLLVIALG) traverse the membrane as a helical segment. Topologically, residues 518 to 770 (CAFKLYSLRT…ASDDEALLVC (253 aa)) are cytoplasmic. The interval 639–753 (LLQAAPGPVP…PLGVCRSPPP (115 aa)) is disordered. Residues 689-703 (RDPEYRPEDKERKAC) are compositionally biased toward basic and acidic residues.

The protein belongs to the LDLR family. As to quaternary structure, binds GGA1 and GGA2.

The protein localises to the membrane. It is found in the coated pit. In terms of biological role, probable receptor, which may be involved in the internalization of lipophilic molecules and/or signal transduction. Its precise role is however unclear, since it does not bind to very low density lipoprotein (VLDL) or to LRPAP1 in vitro. This is Low-density lipoprotein receptor-related protein 3 (Lrp3) from Rattus norvegicus (Rat).